Here is a 432-residue protein sequence, read N- to C-terminus: Alkaline protease secretion protein AprE (432 aa).

Over 1-14 the chain is Cytoplasmic; the sequence is MTRTVKRDENAYAR. The helical transmembrane segment at 15–36 threads the bilayer; the sequence is LGWLLVLFGFGGALLWAAFAPL. The Periplasmic portion of the chain corresponds to 37–432; it reads DQGVAVPATV…DRAHVALAEN (396 aa).

It belongs to the membrane fusion protein (MFP) (TC 8.A.1) family.

It localises to the cell inner membrane. In terms of biological role, involved in the secretion of alkaline protease. This Pseudomonas aeruginosa (strain ATCC 15692 / DSM 22644 / CIP 104116 / JCM 14847 / LMG 12228 / 1C / PRS 101 / PAO1) protein is Alkaline protease secretion protein AprE (aprE).